Reading from the N-terminus, the 217-residue chain is Germin-like protein subfamily 1 member 1 (217 aa).

The signal sequence occupies residues 1-18; the sequence is MILNILLTLTLLMGRVKS. A disulfide bridge connects residues cysteine 27 and cysteine 45. The Cupin type-1 domain occupies 59-209; that stretch reads SALSRPGNTK…AYDINGQDVA (151 aa). A glycan (N-linked (GlcNAc...) asparagine) is linked at asparagine 75. Mn(2+) is bound by residues histidine 108, histidine 110, glutamate 115, and histidine 154.

This sequence belongs to the germin family. In terms of assembly, oligomer (believed to be a pentamer but probably hexamer).

The protein resides in the secreted. Its subcellular location is the extracellular space. The protein localises to the apoplast. May play a role in plant defense. Probably has no oxalate oxidase activity even if the active site is conserved. The protein is Germin-like protein subfamily 1 member 1 (GLP7) of Arabidopsis thaliana (Mouse-ear cress).